The following is a 195-amino-acid chain: Transcription factor 15 (195 aa).

The interval 44–65 (LEAARRGPGPGSGRRASNGAGP) is disordered. Residues 56–65 (GRRASNGAGP) show a composition bias toward low complexity. A Phosphoserine modification is found at Ser-60. Positions 70–122 (RQRQAANARERDRTQSVNTAFTALRTLIPTEPVDRKLSKIETLRLASSYIAHL) constitute a bHLH domain.

As to quaternary structure, heterodimer; efficient DNA binding requires dimerization with another bHLH protein, such as TCF3/E12. Interacts with MEOX2. Expressed in heart and skeletal muscle. Specifically expressed in a subpopulation of embryonic stem cells (ESCs), that are still undifferentiated but primed for ifferentiation. Expressed in hematopoietic stem cells (HSCs).

Its subcellular location is the nucleus. Its function is as follows. Early transcription factor that plays a key role in somitogenesis, paraxial mesoderm development and regulation of stem cell pluripotency. Essential for the mesenchymal to epithelial transition associated with somite formation. Required for somite morphogenesis, thereby regulating patterning of the axial skeleton and skeletal muscles. Required for proper localization of somite epithelium markers during the mesenchymal to epithelial transition. Also plays a key role in regulation of stem cell pluripotency. Promotes pluripotency exit of embryonic stem cells (ESCs) by priming ESCs for differentiation. Acts as a key regulator of self-renewal of hematopoietic stem cells (HSCs) by mediating HSCs quiescence and long-term self-renewal. Together with MEOX2, regulates transcription in heart endothelial cells to regulate fatty acid transport across heart endothelial cells. Acts by forming a heterodimer with another helix-loop-helix (bHLH) protein, such as TCF3/E12, that binds DNA on E-box motifs (5'-CANNTG-3') and activates transcription of target genes. The sequence is that of Transcription factor 15 from Mus musculus (Mouse).